The primary structure comprises 39 residues: Gas vesicle protein C (39 aa).

The protein belongs to the gas vesicle GvpC family.

The protein localises to the gas vesicle. Its function is as follows. Confers stability, involved in shaping gas vesicles, hollow, gas filled proteinaceous nanostructures. During planktonic growth they allow positioning of the organism at a favorable depth for light or nutrient acquisition. This Spirulina sp. (strain CCAP 1475/10) protein is Gas vesicle protein C.